The sequence spans 396 residues: Phosphoglycerate kinase (396 aa).

Residues 23–25 (DFN), arginine 38, 61–64 (HMGK), arginine 122, and arginine 155 each bind substrate. ATP contacts are provided by residues lysine 206, glycine 296, glutamate 327, and 353-356 (GGDS).

The protein belongs to the phosphoglycerate kinase family. In terms of assembly, monomer.

It is found in the cytoplasm. It carries out the reaction (2R)-3-phosphoglycerate + ATP = (2R)-3-phospho-glyceroyl phosphate + ADP. Its pathway is carbohydrate degradation; glycolysis; pyruvate from D-glyceraldehyde 3-phosphate: step 2/5. This chain is Phosphoglycerate kinase, found in Clostridium botulinum (strain Eklund 17B / Type B).